The chain runs to 239 residues: uncharacterized protein (239 aa).

The segment at 94 to 114 (CEVSGKEIPFERLEALPTATT) adopts a dksA C4-type; degenerate zinc-finger fold. Residues 133 to 158 (ETPFGQFEFDDDEEIRAPYDSEDSYQ) show a composition bias toward acidic residues. A disordered region spans residues 133 to 182 (ETPFGQFEFDDDEEIRAPYDSEDSYQDVEKYGNSQTPQDMENPPLSYDDM).

This is an uncharacterized protein from Bacillus subtilis (strain 168).